Consider the following 254-residue polypeptide: 14-3-3-like protein GF14 epsilon (254 aa).

Residues serine 65 and serine 188 each carry the phosphoserine modification.

This sequence belongs to the 14-3-3 family. Interacts with DREB1A and DREB1B in the nucleus. Interacts with CINV1.

The protein resides in the nucleus. It localises to the cytoplasm. Functionally, is associated with a DNA binding complex that binds to the G box, a well-characterized cis-acting DNA regulatory element found in plant genes. This chain is 14-3-3-like protein GF14 epsilon (GRF10), found in Arabidopsis thaliana (Mouse-ear cress).